The primary structure comprises 289 residues: Rhodopsin (289 aa).

Over 1 to 7 (YLVNPAA) the chain is Extracellular. A helical transmembrane segment spans residues 8–32 (YAALGAYMFLLILIGFPVNFLTLYV). Over 33–44 (TIEHKKLRTPLN) the chain is Cytoplasmic. A helical transmembrane segment spans residues 45–67 (YILLNLAVANLFMVLGGFTTTMY). Over 68–81 (TSMHGYFVLGRLGC) the chain is Extracellular. C81 and C158 form a disulfide bridge. A helical transmembrane segment spans residues 82–104 (NLEGFFATMGGEIALWSLVVLAI). The short motif at 105 to 107 (ERW) is the 'Ionic lock' involved in activated form stabilization element. Residues 105 to 123 (ERWIVVCKPISNFRFTEDH) are Cytoplasmic-facing. The helical transmembrane segment at 124–144 (AIMGLAFTWVMALSCAVPPLV) threads the bilayer. Residues 145–173 (GWSRYIPEGMQCSCGVDYYTRAEGFNNES) lie on the Extracellular side of the membrane. N171 carries N-linked (GlcNAc...) asparagine glycosylation. Residues 174–195 (FVIYMFIVHFLTPLIIISFCYG) traverse the membrane as a helical segment. Residues 196-223 (RLLCAVKEAAAAQQESETTQRAEREVSR) are Cytoplasmic-facing. Residues 224–245 (MVVMMVISFLMCWLPYASVAWY) traverse the membrane as a helical segment. At 246 to 257 (IFCNQGSEFGPI) the chain is on the extracellular side. Residues 258–279 (FMTLPAFFAKSSAIYNPLIYIC) form a helical membrane-spanning segment. K267 is modified (N6-(retinylidene)lysine). Topologically, residues 280–289 (MNKQFRHCMI) are cytoplasmic.

Belongs to the G-protein coupled receptor 1 family. Opsin subfamily. Post-translationally, phosphorylated on some or all of the serine and threonine residues present in the C-terminal region. In terms of processing, contains one covalently linked retinal chromophore.

The protein localises to the membrane. It localises to the cell projection. The protein resides in the cilium. It is found in the photoreceptor outer segment. Functionally, photoreceptor required for image-forming vision at low light intensity. While most salt water fish species use retinal as chromophore, most freshwater fish use 3-dehydroretinal, or a mixture of retinal and 3-dehydroretinal. Light-induced isomerization of 11-cis to all-trans retinal triggers a conformational change that activates signaling via G-proteins. Subsequent receptor phosphorylation mediates displacement of the bound G-protein alpha subunit by arrestin and terminates signaling. The polypeptide is Rhodopsin (rho) (Cottocomephorus inermis (Longfin Baikal sculpin)).